The sequence spans 164 residues: Transcriptional regulator MraZ (164 aa).

SpoVT-AbrB domains follow at residues 7–60 and 83–126; these read HFTN…EIDE and SEIL…EPGR. The tract at residues 141–164 is disordered; it reads LRKQLSSRPVAPDAQPPRPHGARE. Over residues 154 to 164 the composition is skewed to pro residues; sequence AQPPRPHGARE.

The protein belongs to the MraZ family. As to quaternary structure, forms oligomers.

It is found in the cytoplasm. Its subcellular location is the nucleoid. The sequence is that of Transcriptional regulator MraZ from Beijerinckia indica subsp. indica (strain ATCC 9039 / DSM 1715 / NCIMB 8712).